Consider the following 688-residue polypeptide: ATP-dependent RNA helicase ded1 (688 aa).

Composition is skewed to polar residues over residues 1 to 15 and 55 to 67; these read MADQ…LSID and GLNN…NNNY. Residues 1-170 form a disordered region; that stretch reads MADQLSSGMG…TPDDPSKQHT (170 aa). The segment covering 88-102 has biased composition (gly residues); that stretch reads GFEGQQGAGWGGPRP. The span at 103–114 shows a compositional bias: low complexity; it reads QGGFNPNAYRGN. Residues 115–129 show a composition bias toward gly residues; the sequence is AGAGAGAGAGGGGGS. Residues 194-222 carry the Q motif motif; it reads LTFSNPPLDNHLISNIQLARYNVPTPVQK. In terms of domain architecture, Helicase ATP-binding spans 225–416; the sequence is IPIVMGGRDL…RDFLKDYIFL (192 aa). Residue 238-245 participates in ATP binding; it reads AQTGSGKT. The short motif at 360–363 is the DEAD box element; it reads DEAD. The 161-residue stretch at 427–587 folds into the Helicase C-terminal domain; that stretch reads NITQKVEYVE…EVPAFLETIA (161 aa). Residues 590 to 615 are disordered; sequence SSFGGGRGGRGGGRGGGRGRTQTADY. Over residues 592 to 608 the composition is skewed to gly residues; it reads FGGGRGGRGGGRGGGRG.

It belongs to the DEAD box helicase family. DDX3/DED1 subfamily.

The protein resides in the cytoplasm. The enzyme catalyses ATP + H2O = ADP + phosphate + H(+). Its function is as follows. ATP-binding RNA helicase involved in translation initiation. Remodels RNA in response to ADP and ATP concentrations by facilitating disruption, but also formation of RNA duplexes. The chain is ATP-dependent RNA helicase ded1 (drh-9) from Neurospora crassa (strain ATCC 24698 / 74-OR23-1A / CBS 708.71 / DSM 1257 / FGSC 987).